Consider the following 203-residue polypeptide: Glutathione-specific gamma-glutamylcyclotransferase (203 aa).

Position 12–17 (12–17 (VFGYGS)) interacts with substrate. The Proton acceptor role is filled by E105.

It belongs to the gamma-glutamylcyclotransferase family. ChaC subfamily.

The protein resides in the cytoplasm. Its subcellular location is the nucleus. The enzyme catalyses glutathione = L-cysteinylglycine + 5-oxo-L-proline. In terms of biological role, gamma-glutamylcyclotransferase acting specifically on glutathione, but not on other gamma-glutamyl peptides. Allows utilization of gluthathione through subsequent cleavage of the Cys-Gly dipeptide by Cys-Gly metallodipeptidase dug1. This is Glutathione-specific gamma-glutamylcyclotransferase from Schizosaccharomyces pombe (strain 972 / ATCC 24843) (Fission yeast).